The primary structure comprises 135 residues: Protein PsiE homolog (135 aa).

A run of 4 helical transmembrane segments spans residues 14 to 34 (LQTILNIGLLVLATILVIFLV), 54 to 74 (YQLIEGIVIYFLYFEFIALIV), 82 to 102 (HFPLRYFIYIGITAIIRLIIV), and 107 to 127 (PSDTLMYSAAILLLVVTLYLA).

This sequence belongs to the PsiE family.

It is found in the cell inner membrane. The chain is Protein PsiE homolog from Pectobacterium carotovorum subsp. carotovorum (strain PC1).